Here is a 365-residue protein sequence, read N- to C-terminus: tRNA N6-adenosine threonylcarbamoyltransferase (365 aa).

Residues histidine 119 and histidine 123 each coordinate Fe cation. Substrate-binding positions include 141 to 145 (LVSGG), aspartate 174, and glycine 187. A disordered region spans residues 184–203 (QPGGPSVEGEARQGDPKRFR). Residues 192 to 201 (GEARQGDPKR) are compositionally biased toward basic and acidic residues. A substrate-binding site is contributed by asparagine 289. Position 317 (aspartate 317) interacts with Fe cation. The tract at residues 342 to 365 (ARPRWPLDQSSPAMLGSGKKGAKA) is disordered.

This sequence belongs to the KAE1 / TsaD family. It depends on Fe(2+) as a cofactor.

It is found in the cytoplasm. It catalyses the reaction L-threonylcarbamoyladenylate + adenosine(37) in tRNA = N(6)-L-threonylcarbamoyladenosine(37) in tRNA + AMP + H(+). Functionally, required for the formation of a threonylcarbamoyl group on adenosine at position 37 (t(6)A37) in tRNAs that read codons beginning with adenine. Is involved in the transfer of the threonylcarbamoyl moiety of threonylcarbamoyl-AMP (TC-AMP) to the N6 group of A37, together with TsaE and TsaB. TsaD likely plays a direct catalytic role in this reaction. The sequence is that of tRNA N6-adenosine threonylcarbamoyltransferase from Ruegeria pomeroyi (strain ATCC 700808 / DSM 15171 / DSS-3) (Silicibacter pomeroyi).